Reading from the N-terminus, the 188-residue chain is Peptidyl-tRNA hydrolase (188 aa).

Tyr14 contacts tRNA. The active-site Proton acceptor is the His19. TRNA contacts are provided by Tyr64, Asn66, and Asn112.

The protein belongs to the PTH family. Monomer.

The protein localises to the cytoplasm. The enzyme catalyses an N-acyl-L-alpha-aminoacyl-tRNA + H2O = an N-acyl-L-amino acid + a tRNA + H(+). Its function is as follows. Hydrolyzes ribosome-free peptidyl-tRNAs (with 1 or more amino acids incorporated), which drop off the ribosome during protein synthesis, or as a result of ribosome stalling. Functionally, catalyzes the release of premature peptidyl moieties from peptidyl-tRNA molecules trapped in stalled 50S ribosomal subunits, and thus maintains levels of free tRNAs and 50S ribosomes. This chain is Peptidyl-tRNA hydrolase, found in Leuconostoc mesenteroides subsp. mesenteroides (strain ATCC 8293 / DSM 20343 / BCRC 11652 / CCM 1803 / JCM 6124 / NCDO 523 / NBRC 100496 / NCIMB 8023 / NCTC 12954 / NRRL B-1118 / 37Y).